The primary structure comprises 40 residues: Beta-defensin 2 (40 aa).

Disulfide bonds link Cys-7-Cys-36, Cys-14-Cys-29, and Cys-19-Cys-37.

The protein belongs to the beta-defensin family. Neutrophilic granules.

It localises to the secreted. Functionally, has bactericidal activity. Active against E.coli ML35 and S.aureus 502A. The protein is Beta-defensin 2 (DEFB2) of Bos taurus (Bovine).